Consider the following 159-residue polypeptide: Vesicle transport protein SFT2A (159 aa).

Over 1-36 the chain is Cytoplasmic; that stretch reads MEKLRRVLSGQDDEEQGLTAQVLDASSLSFNTRLKW. A Phosphoserine modification is found at S9. The helical transmembrane segment at 37 to 57 threads the bilayer; that stretch reads FAICFVCGVFFSILGTGLLWL. The Lumenal segment spans residues 58-62; that stretch reads PGGIK. The chain crosses the membrane as a helical span at residues 63 to 83; that stretch reads LFAVFYTLGNLAALASTCFLM. The Cytoplasmic segment spans residues 84–97; sequence GPVKQLKKMFEATR. The helical transmembrane segment at 98–118 threads the bilayer; sequence LLATIVMLLCFIFTLCAALWW. Residues 119–122 lie on the Lumenal side of the membrane; the sequence is HKKG. The chain crosses the membrane as a helical span at residues 123–143; the sequence is LAVLFCILQFLSMTWYSLSYI. The Cytoplasmic segment spans residues 144–159; sequence PYARDAVIKCCSSLLS.

It belongs to the SFT2 family.

The protein localises to the membrane. Its function is as follows. May be involved in fusion of retrograde transport vesicles derived from an endocytic compartment with the Golgi complex. The chain is Vesicle transport protein SFT2A from Homo sapiens (Human).